A 275-amino-acid chain; its full sequence is 2-dehydro-3-deoxyphosphooctonate aldolase (275 aa).

This sequence belongs to the KdsA family.

Its subcellular location is the cytoplasm. It carries out the reaction D-arabinose 5-phosphate + phosphoenolpyruvate + H2O = 3-deoxy-alpha-D-manno-2-octulosonate-8-phosphate + phosphate. It functions in the pathway carbohydrate biosynthesis; 3-deoxy-D-manno-octulosonate biosynthesis; 3-deoxy-D-manno-octulosonate from D-ribulose 5-phosphate: step 2/3. Its pathway is bacterial outer membrane biogenesis; lipopolysaccharide biosynthesis. This is 2-dehydro-3-deoxyphosphooctonate aldolase from Francisella tularensis subsp. mediasiatica (strain FSC147).